The primary structure comprises 338 residues: 6-phosphogluconolactonase (338 aa).

It belongs to the cycloisomerase 2 family.

It catalyses the reaction 6-phospho-D-glucono-1,5-lactone + H2O = 6-phospho-D-gluconate + H(+). Its pathway is carbohydrate degradation; pentose phosphate pathway; D-ribulose 5-phosphate from D-glucose 6-phosphate (oxidative stage): step 2/3. Its function is as follows. Catalyzes the hydrolysis of 6-phosphogluconolactone to 6-phosphogluconate. This is 6-phosphogluconolactonase from Blochmanniella floridana.